The primary structure comprises 188 residues: Elongation factor P (188 aa).

It belongs to the elongation factor P family.

The protein localises to the cytoplasm. The protein operates within protein biosynthesis; polypeptide chain elongation. In terms of biological role, involved in peptide bond synthesis. Stimulates efficient translation and peptide-bond synthesis on native or reconstituted 70S ribosomes in vitro. Probably functions indirectly by altering the affinity of the ribosome for aminoacyl-tRNA, thus increasing their reactivity as acceptors for peptidyl transferase. The polypeptide is Elongation factor P (Ureaplasma urealyticum serovar 10 (strain ATCC 33699 / Western)).